The primary structure comprises 179 residues: Cytochrome b6-f complex iron-sulfur subunit 1 (179 aa).

Residues 21–43 form a helical membrane-spanning segment; the sequence is LLTFGTVTGVALGALYPVVNYFI. A Rieske domain is found at 61-162; it reads GNDVSVSKFL…AKTENDKIVL (102 aa). Residues Cys108, His110, Cys126, and His129 each coordinate [2Fe-2S] cluster. Cysteines 113 and 128 form a disulfide.

Belongs to the Rieske iron-sulfur protein family. The 4 large subunits of the cytochrome b6-f complex are cytochrome b6, subunit IV (17 kDa polypeptide, PetD), cytochrome f and the Rieske protein, while the 4 small subunits are PetG, PetL, PetM and PetN. The complex functions as a dimer. The cofactor is [2Fe-2S] cluster.

It is found in the cellular thylakoid membrane. It carries out the reaction 2 oxidized [plastocyanin] + a plastoquinol + 2 H(+)(in) = 2 reduced [plastocyanin] + a plastoquinone + 4 H(+)(out). Functionally, component of the cytochrome b6-f complex, which mediates electron transfer between photosystem II (PSII) and photosystem I (PSI), cyclic electron flow around PSI, and state transitions. This Trichormus variabilis (strain ATCC 29413 / PCC 7937) (Anabaena variabilis) protein is Cytochrome b6-f complex iron-sulfur subunit 1.